We begin with the raw amino-acid sequence, 498 residues long: Neuronal acetylcholine receptor subunit beta-4 (498 aa).

Positions 1-21 (MRRAPSLVLFFLVALCGRGNC) are cleaved as a signal peptide. Over 22-239 (RVANAEEKLM…RKPLFYTINL (218 aa)) the chain is Extracellular. N-linked (GlcNAc...) asparagine glycosylation is found at N36, N93, N138, and N166. C153 and C167 are disulfide-bonded. The helical transmembrane segment at 240–255 (IIPCVLTTLLAILVFY) threads the bilayer. The Cytoplasmic portion of the chain corresponds to 256 to 261 (LPSDCG). E262 contributes to the Na(+) binding site. A helical transmembrane segment spans residues 262-277 (EKMTLCISVLLALTFF). The Extracellular segment spans residues 278 to 296 (LLLISKIVPPTSLDVPLIG). A helical transmembrane segment spans residues 297 to 321 (KYLMFTMVLVTFSIVTSVCVLNVHH). The Cytoplasmic portion of the chain corresponds to 322–454 (RSPSTHTMAP…QSVVEDWKYV (133 aa)). The interval 357–377 (ARAFPPSKSCVTKPEATATST) is disordered. The helical transmembrane segment at 455-478 (AMVVDRLFLWVFMFVCVLGTVGLF) threads the bilayer. Topologically, residues 479-498 (LPPLFQTHAASEGPYAAQRD) are extracellular.

It belongs to the ligand-gated ion channel (TC 1.A.9) family. Acetylcholine receptor (TC 1.A.9.1) subfamily. Beta-4/CHRNB4 sub-subfamily. Neuronal AChR is composed of two different types of subunits: alpha and beta. CHRNB4/Beta-4 subunit can be combined to CHRNA2/alpha-2, CHRNA3/alpha-3 or CHRNA4/alpha-4, CHRNA5/alpha-5 and CHRNB3/beta-3 to give rise to functional receptors. Forms stoichiometries such as (CHRNA3)2:(CHRNB4)3 or (CHRNA3:CHRNB4)2:CHRNB3. Interacts with RIC3; which is required for proper folding and assembly. Interacts with LYPD6.

It localises to the synaptic cell membrane. The protein localises to the cell membrane. It catalyses the reaction Ca(2+)(in) = Ca(2+)(out). The enzyme catalyses K(+)(in) = K(+)(out). It carries out the reaction Na(+)(in) = Na(+)(out). Activated by a myriad of ligands such as acetylcholine, cytisine, nicotine, choline and epibatidine. The heteropentamer CHRNA3:CHRNB4 activity is blocked by the alpha-conotoxin ImI and AuIB. In terms of biological role, component of neuronal acetylcholine receptors (nAChRs) that function as pentameric, ligand-gated cation channels with high calcium permeability among other activities. nAChRs are excitatory neurotrasnmitter receptors formed by a collection of nAChR subunits known to mediate synaptic transmission in the nervous system and the neuromuscular junction. Each nAchR subunit confers differential attributes to channel properties, including activation, deactivation and desensitization kinetics, pH sensitivity, cation permeability, and binding to allosteric modulators. CHRNB4 forms heteropentameric neuronal acetylcholine receptors with CHRNA2, CHRNA3 and CHRNA4, as well as CHRNA5 and CHRNB3 as accesory subunits. CHRNA3:CHRNB4 being predominant in neurons of the autonomic ganglia, it is known as ganglionic nicotinic receptor. CHRNA3:CHRNB4 or CHRNA3:CHRNA5:CHRNB4 play also an important role in the habenulo-interpeduncular tract, modulating the mesolimbic dopamine system and affecting reward circuits and addiction. Hypothalamic CHRNA3:CHRNB4 nAChR activation by nicotine leads to activation of POMC neurons and a decrease in food intake. This is Neuronal acetylcholine receptor subunit beta-4 from Homo sapiens (Human).